We begin with the raw amino-acid sequence, 289 residues long: Glucosamine-6-phosphate deaminase 1 (289 aa).

The Proton acceptor; for enolization step role is filled by aspartate 72. Aspartate 141 (for ring-opening step) is an active-site residue. Histidine 143 acts as the Proton acceptor; for ring-opening step in catalysis. Catalysis depends on glutamate 148, which acts as the For ring-opening step. Threonine 161 is subject to Phosphothreonine.

This sequence belongs to the glucosamine/galactosamine-6-phosphate isomerase family. In terms of assembly, homohexamer. Widely expressed. Detected in brain, liver, kidney, muscle, ovary, testis, spermatids and spermatozoa. In spermatids, located close to the developing acrosome vesicle. In spermatozoa, found close to the acrosomal region.

Its subcellular location is the cytoplasm. It catalyses the reaction alpha-D-glucosamine 6-phosphate + H2O = beta-D-fructose 6-phosphate + NH4(+). The protein operates within nucleotide-sugar biosynthesis; UDP-N-acetyl-alpha-D-glucosamine biosynthesis; alpha-D-glucosamine 6-phosphate from D-fructose 6-phosphate: step 1/1. Its activity is regulated as follows. Allosterically activated by N-acetylglucosamine-6-phosphate (GlcNAc6P). Its function is as follows. Catalyzes the reversible conversion of alpha-D-glucosamine 6-phosphate (GlcN-6P) into beta-D-fructose 6-phosphate (Fru-6P) and ammonium ion, a regulatory reaction step in de novo uridine diphosphate-N-acetyl-alpha-D-glucosamine (UDP-GlcNAc) biosynthesis via hexosamine pathway. Deamination is coupled to aldo-keto isomerization mediating the metabolic flux from UDP-GlcNAc toward Fru-6P. At high ammonium level can drive amination and isomerization of Fru-6P toward hexosamines and UDP-GlcNAc synthesis. Has a role in fine tuning the metabolic fluctuations of cytosolic UDP-GlcNAc and their effects on hyaluronan synthesis that occur during tissue remodeling. Seems to trigger calcium oscillations in mammalian eggs. These oscillations serve as the essential trigger for egg activation and early development of the embryo. This chain is Glucosamine-6-phosphate deaminase 1, found in Mus musculus (Mouse).